A 265-amino-acid polypeptide reads, in one-letter code: tRNA (guanine-N(7)-)-methyltransferase (265 aa).

Residues 1 to 16 are compositionally biased toward basic and acidic residues; it reads MNHDDPNASGVPHDDA. The tract at residues 1–40 is disordered; sequence MNHDDPNASGVPHDDANDAAPASASDAARATGHADDESSP. Residues 18–31 are compositionally biased toward low complexity; sequence DAAPASASDAARAT. S-adenosyl-L-methionine is bound by residues Glu-95, Glu-120, Asp-147, and Asp-170. The active site involves Asp-170. Substrate-binding positions include Lys-174, Asp-206, and 241 to 244; that span reads TKFE.

The protein belongs to the class I-like SAM-binding methyltransferase superfamily. TrmB family.

It carries out the reaction guanosine(46) in tRNA + S-adenosyl-L-methionine = N(7)-methylguanosine(46) in tRNA + S-adenosyl-L-homocysteine. Its pathway is tRNA modification; N(7)-methylguanine-tRNA biosynthesis. Functionally, catalyzes the formation of N(7)-methylguanine at position 46 (m7G46) in tRNA. The sequence is that of tRNA (guanine-N(7)-)-methyltransferase from Burkholderia thailandensis (strain ATCC 700388 / DSM 13276 / CCUG 48851 / CIP 106301 / E264).